Here is a 239-residue protein sequence, read N- to C-terminus: tRNA (guanine-N(1)-)-methyltransferase (239 aa).

S-adenosyl-L-methionine-binding positions include Gly-109 and Ile-133–Leu-138. Disordered regions lie at residues Pro-163–Pro-187 and Gln-217–Arg-239. Composition is skewed to basic and acidic residues over residues Ser-165 to Glu-180 and Gln-217 to Leu-226.

This sequence belongs to the RNA methyltransferase TrmD family. As to quaternary structure, homodimer.

Its subcellular location is the cytoplasm. It carries out the reaction guanosine(37) in tRNA + S-adenosyl-L-methionine = N(1)-methylguanosine(37) in tRNA + S-adenosyl-L-homocysteine + H(+). In terms of biological role, specifically methylates guanosine-37 in various tRNAs. This chain is tRNA (guanine-N(1)-)-methyltransferase, found in Mycolicibacterium paratuberculosis (strain ATCC BAA-968 / K-10) (Mycobacterium paratuberculosis).